We begin with the raw amino-acid sequence, 240 residues long: uncharacterized protein (240 aa).

Positions 197 to 210 (PLKSHSASRLNHLT) are enriched in polar residues. Residues 197 to 222 (PLKSHSASRLNHLTPSPRPGETPLEN) are disordered.

This is an uncharacterized protein from Caenorhabditis elegans.